A 2027-amino-acid polypeptide reads, in one-letter code: Citron Rho-interacting kinase (2027 aa).

An N-acetylmethionine modification is found at Met-1. A Protein kinase domain is found at 97–360 (FEVRSLVGCG…FEGLCCHPFF (264 aa)). Residues 103 to 111 (VGCGHFAEV) and Lys-126 each bind ATP. Asp-221 functions as the Proton acceptor in the catalytic mechanism. The region spanning 361–431 (SKIDWNNIRN…SKALGILGRS (71 aa)) is the AGC-kinase C-terminal domain. Phosphoserine occurs at positions 433, 440, 480, and 582. Residues 453 to 1297 (IKSKELQDSQ…SAREEAAHRK (845 aa)) are a coiled coil. The interaction with Rho/Rac stretch occupies residues 1091 to 1302 (LAVKEHKAEI…AAHRKATDHP (212 aa)). Position 1196 is a phosphotyrosine (Tyr-1196). Residues 1290–1303 (REEAAHRKATDHPH) show a composition bias toward basic and acidic residues. Disordered stretches follow at residues 1290-1310 (REEA…PATA) and 1322-1351 (SPEH…EFSR). The span at 1327–1337 (PSAMSLLAPPS) shows a compositional bias: low complexity. The segment covering 1339–1351 (RRKESSTPEEFSR) has biased composition (basic and acidic residues). The Phorbol-ester/DAG-type zinc-finger motif lies at 1362 to 1411 (PHRFNVGLNMRATKCAVCLDTVHFGRQASKCLECQVMCHPKCSTCLPATC). The PH domain occupies 1443–1563 (SLHLEGWMKV…WVTALESVVA (121 aa)). A CNH domain is found at 1591–1881 (RLDMNCTLPF…RYLGPAISSG (291 aa)). Lys-1721 bears the N6-acetyllysine mark. The segment at 1905-2012 (ESGTEHHRGP…RGRLPAGAVR (108 aa)) is disordered. Residue Ser-1940 is modified to Phosphoserine. A compositionally biased stretch (basic and acidic residues) spans 1948–2003 (SHPREPSTPHRYREGRTELRRDKSPGRPLEREKSPGRMLSTRRERSPGRLFEDSSR). The short motif at 1953–1958 (PSTPHR) is the SH3-binding element. Phosphoserine is present on Ser-1993. A Phosphothreonine modification is found at Thr-2013.

Belongs to the protein kinase superfamily. AGC Ser/Thr protein kinase family. As to quaternary structure, directly interacts with KIF14 depending on the activation state (stronger interaction with the kinase-dead form). Homodimer. Interacts with TTC3.

Its subcellular location is the cytoplasm. It carries out the reaction L-seryl-[protein] + ATP = O-phospho-L-seryl-[protein] + ADP + H(+). The catalysed reaction is L-threonyl-[protein] + ATP = O-phospho-L-threonyl-[protein] + ADP + H(+). Functionally, plays a role in cytokinesis. Required for KIF14 localization to the central spindle and midbody. Putative RHO/RAC effector that binds to the GTP-bound forms of RHO and RAC1. It probably binds p21 with a tighter specificity in vivo. Displays serine/threonine protein kinase activity. Plays an important role in the regulation of cytokinesis and the development of the central nervous system. Phosphorylates MYL9/MLC2. This is Citron Rho-interacting kinase (CIT) from Homo sapiens (Human).